A 256-amino-acid polypeptide reads, in one-letter code: Vesicle-associated protein 1-1 (256 aa).

At methionine 1 the chain carries N-acetylmethionine. The Cytoplasmic segment spans residues 1-232; that stretch reads MSNIDLIGMS…RRESKKSQSG (232 aa). N-acetylserine; in Vesicle-associated protein 1-1, N-terminally processed is present on serine 2. The MSP domain maps to 22–142; that stretch reads LLTVEPLDLQ…EETKLRVTYV (121 aa). The interval 142–169 is disordered; the sequence is VAPPRPPSPVHEGSEEGSSPRASVSDNG. A Phosphoserine modification is found at serine 149. The segment covering 157 to 169 has biased composition (polar residues); that stretch reads EGSSPRASVSDNG. Residues 187-232 are a coiled coil; sequence HQENTSEARALITKLTEEKQSAIQLNNRLQRELDQLRRESKKSQSG. A helical; Anchor for type IV membrane protein membrane pass occupies residues 233-253; that stretch reads GIPFMYVLLVGLIGLILGYIM.

Belongs to the VAMP-associated protein (VAP) (TC 9.B.17) family. In terms of assembly, homodimer or homooligomer. Interacts with the cowpea mosaic virus (CPMV) NTP-binding protein (NTB). Interacts with NET3C.

The protein localises to the endoplasmic reticulum membrane. Its subcellular location is the protein storage vacuole membrane. Functionally, part of a membrane-cytoskeletal adapter complex that forms a bridge between the endoplasmic reticulum and the plasma membrane. Associates with microtubules. This Arabidopsis thaliana (Mouse-ear cress) protein is Vesicle-associated protein 1-1 (PVA11).